Reading from the N-terminus, the 223-residue chain is Ribosome maturation factor RimM (223 aa).

Positions 1–12 (MARRPGSSSRGP) are enriched in low complexity. 2 disordered regions span residues 1-44 (MARR…DPGL) and 203-223 (VADPPDDLFAPPGPKPADDPG). Positions 135–210 (DEDEFFLTDL…KVVADPPDDL (76 aa)) constitute a PRC barrel domain.

The protein belongs to the RimM family. As to quaternary structure, binds ribosomal protein uS19.

It localises to the cytoplasm. Functionally, an accessory protein needed during the final step in the assembly of 30S ribosomal subunit, possibly for assembly of the head region. Essential for efficient processing of 16S rRNA. May be needed both before and after RbfA during the maturation of 16S rRNA. It has affinity for free ribosomal 30S subunits but not for 70S ribosomes. The sequence is that of Ribosome maturation factor RimM from Methylorubrum extorquens (strain CM4 / NCIMB 13688) (Methylobacterium extorquens).